The primary structure comprises 106 residues: Large ribosomal subunit protein uL22 (106 aa).

The protein belongs to the universal ribosomal protein uL22 family. As to quaternary structure, part of the 50S ribosomal subunit.

Its function is as follows. This protein binds specifically to 23S rRNA; its binding is stimulated by other ribosomal proteins, e.g. L4, L17, and L20. It is important during the early stages of 50S assembly. It makes multiple contacts with different domains of the 23S rRNA in the assembled 50S subunit and ribosome. The globular domain of the protein is located near the polypeptide exit tunnel on the outside of the subunit, while an extended beta-hairpin is found that lines the wall of the exit tunnel in the center of the 70S ribosome. The sequence is that of Large ribosomal subunit protein uL22 from Nautilia profundicola (strain ATCC BAA-1463 / DSM 18972 / AmH).